Reading from the N-terminus, the 458-residue chain is Flavonol 3-O-glucosyltransferase F3GT2 (458 aa).

The active-site Proton acceptor is the His-20. His-20 lines the an anthocyanidin pocket. Asp-119 acts as the Charge relay in catalysis. Thr-141 lines the UDP-alpha-D-glucose pocket. His-150 contributes to the an anthocyanidin binding site. Residues Ala-333, Gln-335, His-350, Trp-353, Asn-354, Ser-355, and Glu-358 each contribute to the UDP-alpha-D-glucose site. Residue Gly-373 coordinates an anthocyanidin. UDP-alpha-D-glucose contacts are provided by Asp-374 and Gln-375.

This sequence belongs to the UDP-glycosyltransferase family. As to expression, expressed in ovaries.

It catalyses the reaction a flavonol + UDP-alpha-D-glucose = a flavonol 3-O-beta-D-glucoside + UDP + H(+). The protein operates within flavonoid metabolism. Catalyzes the glucosylation of quercetin. Preferentially uses UDP-glucose as sugar donor, but is also able to use UDP-gal and UDP-xyl. Is probably not required for the accumulation of anthocyanin in red-fleshed kiwifruit varieties. The polypeptide is Flavonol 3-O-glucosyltransferase F3GT2 (Actinidia chinensis var. chinensis (Chinese soft-hair kiwi)).